Here is a 90-residue protein sequence, read N- to C-terminus: DNA-directed RNA polymerase subunit omega (90 aa).

The disordered stretch occupies residues 69–90 (RQEQQEQEAAELAAVSSIAHNR).

It belongs to the RNA polymerase subunit omega family. The RNAP catalytic core consists of 2 alpha, 1 beta, 1 beta' and 1 omega subunit. When a sigma factor is associated with the core the holoenzyme is formed, which can initiate transcription.

The enzyme catalyses RNA(n) + a ribonucleoside 5'-triphosphate = RNA(n+1) + diphosphate. In terms of biological role, promotes RNA polymerase assembly. Latches the N- and C-terminal regions of the beta' subunit thereby facilitating its interaction with the beta and alpha subunits. The sequence is that of DNA-directed RNA polymerase subunit omega from Vibrio parahaemolyticus serotype O3:K6 (strain RIMD 2210633).